Consider the following 365-residue polypeptide: tRNA-specific 2-thiouridylase MnmA (365 aa).

ATP-binding positions include 6 to 13 (AMSGGVDS) and Leu-32. The active-site Nucleophile is Cys-101. Residues Cys-101 and Cys-199 are joined by a disulfide bond. An ATP-binding site is contributed by Gly-125. The segment at 149–151 (KDQ) is interaction with tRNA. Catalysis depends on Cys-199, which acts as the Cysteine persulfide intermediate.

Belongs to the MnmA/TRMU family.

The protein resides in the cytoplasm. The catalysed reaction is S-sulfanyl-L-cysteinyl-[protein] + uridine(34) in tRNA + AH2 + ATP = 2-thiouridine(34) in tRNA + L-cysteinyl-[protein] + A + AMP + diphosphate + H(+). In terms of biological role, catalyzes the 2-thiolation of uridine at the wobble position (U34) of tRNA, leading to the formation of s(2)U34. This chain is tRNA-specific 2-thiouridylase MnmA, found in Corynebacterium efficiens (strain DSM 44549 / YS-314 / AJ 12310 / JCM 11189 / NBRC 100395).